A 252-amino-acid polypeptide reads, in one-letter code: 3-dehydroquinate dehydratase (252 aa).

3-dehydroquinate-binding positions include 46–48 (EWR) and Arg82. His143 (proton donor/acceptor) is an active-site residue. Catalysis depends on Lys170, which acts as the Schiff-base intermediate with substrate. 3 residues coordinate 3-dehydroquinate: Arg212, Ser231, and Gln235.

The protein belongs to the type-I 3-dehydroquinase family. Homodimer.

The catalysed reaction is 3-dehydroquinate = 3-dehydroshikimate + H2O. Its pathway is metabolic intermediate biosynthesis; chorismate biosynthesis; chorismate from D-erythrose 4-phosphate and phosphoenolpyruvate: step 3/7. Its function is as follows. Involved in the third step of the chorismate pathway, which leads to the biosynthesis of aromatic amino acids. Catalyzes the cis-dehydration of 3-dehydroquinate (DHQ) and introduces the first double bond of the aromatic ring to yield 3-dehydroshikimate. This is 3-dehydroquinate dehydratase from Listeria monocytogenes serotype 4b (strain F2365).